A 329-amino-acid chain; its full sequence is Putative glucose ABC transporter permease protein TsgC13 (329 aa).

7 consecutive transmembrane segments (helical) span residues 3-23 (FAAGLLNATVQAATVLLLAGL), 32-52 (GVLNLGVEGMMLVGALGGFVV), 60-80 (WLGFGVGIACGMALAAVHAFL), 89-109 (VISGVMLTLLGTGLTTFFGSG), 139-161 (AFFRSTATDYLALLAVPVVWFFL), 193-213 (LAVIIGGGFAGAAGAHLSLAF), and 216-236 (LWVPGMTVGRGWIAVALVVFA).

This sequence belongs to the binding-protein-dependent transport system permease family. As to quaternary structure, the complex is composed of two ATP-binding proteins (TsgD13), two transmembrane proteins (TsgB13 and TsgC13) and a solute-binding protein (TsgA13).

The protein resides in the cell membrane. Part of an ABC transporter complex involved in glucose import (Potential). Responsible for the translocation of the substrate across the membrane. The sequence is that of Putative glucose ABC transporter permease protein TsgC13 (tsgC13) from Haloferax volcanii (strain ATCC 29605 / DSM 3757 / JCM 8879 / NBRC 14742 / NCIMB 2012 / VKM B-1768 / DS2) (Halobacterium volcanii).